We begin with the raw amino-acid sequence, 286 residues long: Pantothenate synthetase (286 aa).

Methionine 31 to histidine 38 contacts ATP. Histidine 38 acts as the Proton donor in catalysis. Glutamine 65 is a binding site for (R)-pantoate. Residue glutamine 65 coordinates beta-alanine. Residue glycine 153–aspartate 156 participates in ATP binding. (R)-pantoate is bound at residue glutamine 159. Residue leucine 190–arginine 193 coordinates ATP.

The protein belongs to the pantothenate synthetase family. As to quaternary structure, homodimer.

It is found in the cytoplasm. The enzyme catalyses (R)-pantoate + beta-alanine + ATP = (R)-pantothenate + AMP + diphosphate + H(+). It participates in cofactor biosynthesis; (R)-pantothenate biosynthesis; (R)-pantothenate from (R)-pantoate and beta-alanine: step 1/1. Functionally, catalyzes the condensation of pantoate with beta-alanine in an ATP-dependent reaction via a pantoyl-adenylate intermediate. In Corynebacterium diphtheriae (strain ATCC 700971 / NCTC 13129 / Biotype gravis), this protein is Pantothenate synthetase.